The sequence spans 1019 residues: Clotting factor C (1019 aa).

The first 25 residues, 1 to 25 (MVLASFLVSGLVLGILAQQMRPVQS), serve as a signal peptide directing secretion. An EGF-like domain is found at 102–137 (YGTWCSGECQCKNGGICDQRTGACTCRDRYEGAHCE). 16 disulfide bridges follow: Cys110/Cys118, Cys112/Cys125, Cys127/Cys136, Cys142/Cys182, Cys168/Cys195, Cys199/Cys241, Cys227/Cys254, Cys260/Cys308, Cys294/Cys321, Cys331/Cys350, Cys354/Cys374, Cys464/Cys564, Cys538/Cys556, Cys576/Cys621, Cys607/Cys634, and Cys720/Cys748. 3 consecutive Sushi domains span residues 140–197 (KGCP…KCIR), 198–256 (ECAK…QCKK), and 258–323 (VFCP…SCVK). The LCCL domain maps to 325–421 (ADREVDCDSK…EELKSLARSF (97 aa)). In terms of domain architecture, C-type lectin spans 436–568 (CPDGWFEVEE…PSSFACMMDL (133 aa)). 2 N-linked (GlcNAc...) asparagine glycosylation sites follow: Asn523 and Asn534. Sushi domains follow at residues 574-636 (AKCD…RCIK) and 689-750 (PRSS…SCIP). Residues Asn624, Asn740, and Asn767 are each glycosylated (N-linked (GlcNAc...) asparagine). Residues 763-1019 (IWNGNSTEIG…VFLSWIRQFI (257 aa)) enclose the Peptidase S1 domain. Cysteines 794 and 810 form a disulfide. Catalysis depends on charge relay system residues His809 and Asp865. Asn912 is a glycosylation site (N-linked (GlcNAc...) asparagine). An intrachain disulfide couples Cys932 to Cys951. Asp960 contacts substrate. Cys962 and Cys996 are joined by a disulfide. Catalysis depends on Ser966, which acts as the Charge relay system.

The protein belongs to the peptidase S1 family. As to quaternary structure, heterodimer of a light chain and a heavy chain linked by a disulfide bond. Forms a covalent heterodimer with intracellular coagulation inhibitor 1/LICI-1. Forms a covalent heterodimer with intracellular coagulation inhibitor 2/LICI-2. In terms of processing, N-glycosylated. Post-translationally, lipopolysaccharide (LPS) activates clotting factor C by inducing the proteolytic cleavage of the clotting factor C light chain into clotting factor C chains A and B. Clotting factor C chains heavy, A and B remain associated via interchain disulfide bonds. Expressed in hemocytes (at protein level).

Its subcellular location is the secreted. It catalyses the reaction Selective cleavage of 103-Arg-|-Ser-104 and 124-Ile-|-Ile-125 bonds in Limulus clotting factor B to form activated factor B. Cleavage of -Pro-Arg-|-Xaa- bonds in synthetic substrates.. Activated by Gram-negative bacterial lipopolysaccharides. Inhibited by intracellular coagulation inhibitor 1/LICI-1 and to a lesser extent by intracellular coagulation inhibitors 2/LICI-2 and 3/LICI-3. Inhibited by the small molecule diisopropyl fluorophosphate (DFP). Its function is as follows. This enzyme is closely associated with an endotoxin-sensitive hemolymph coagulation system which may play important roles in both hemostasis and host defense mechanisms. Its active form catalyzes the activation of clotting factor B. This chain is Clotting factor C, found in Tachypleus tridentatus (Japanese horseshoe crab).